Here is a 202-residue protein sequence, read N- to C-terminus: Small ribosomal subunit protein uS4 (202 aa).

The segment at 15-42 (LGDLPGLTRKAAKRSYPPGQHGQARRKR) is disordered. The 63-residue stretch at 90 to 152 (NRLDNVCFRL…KCSKQLAEGN (63 aa)) folds into the S4 RNA-binding domain.

The protein belongs to the universal ribosomal protein uS4 family. As to quaternary structure, part of the 30S ribosomal subunit. Contacts protein S5. The interaction surface between S4 and S5 is involved in control of translational fidelity.

In terms of biological role, one of the primary rRNA binding proteins, it binds directly to 16S rRNA where it nucleates assembly of the body of the 30S subunit. Functionally, with S5 and S12 plays an important role in translational accuracy. This is Small ribosomal subunit protein uS4 from Synechococcus sp. (strain WH7803).